Consider the following 207-residue polypeptide: MMIVIGYDAGNTANVLRALAQVGVAARLSADPQEILAADGLILPGVGAFPAAMQELEKRGLISVIQQAVADGKPLLGICLGMQLLLESGLENGQNSGLGLIPGVCRRIPDQAGLPVPHMGWNDLQLQQSSALTAGLDGQSVYFVHSYYTDVPEEYLDVTADYGRPIPAMIHRGSVFGCQFHPEKSGAVGLGILEKFKEYVYENTARY.

The Glutamine amidotransferase type-1 domain maps to 1–206 (MMIVIGYDAG…KEYVYENTAR (206 aa)). Cys79 acts as the Nucleophile in catalysis. Catalysis depends on residues His181 and Glu183.

In terms of assembly, heterodimer of HisH and HisF.

The protein localises to the cytoplasm. The catalysed reaction is 5-[(5-phospho-1-deoxy-D-ribulos-1-ylimino)methylamino]-1-(5-phospho-beta-D-ribosyl)imidazole-4-carboxamide + L-glutamine = D-erythro-1-(imidazol-4-yl)glycerol 3-phosphate + 5-amino-1-(5-phospho-beta-D-ribosyl)imidazole-4-carboxamide + L-glutamate + H(+). It catalyses the reaction L-glutamine + H2O = L-glutamate + NH4(+). Its pathway is amino-acid biosynthesis; L-histidine biosynthesis; L-histidine from 5-phospho-alpha-D-ribose 1-diphosphate: step 5/9. Its function is as follows. IGPS catalyzes the conversion of PRFAR and glutamine to IGP, AICAR and glutamate. The HisH subunit catalyzes the hydrolysis of glutamine to glutamate and ammonia as part of the synthesis of IGP and AICAR. The resulting ammonia molecule is channeled to the active site of HisF. The sequence is that of Imidazole glycerol phosphate synthase subunit HisH from Streptococcus gordonii (strain Challis / ATCC 35105 / BCRC 15272 / CH1 / DL1 / V288).